The following is a 1067-amino-acid chain: Probable isoleucine--tRNA ligase, cytoplasmic (1067 aa).

The 'HIGH' region signature appears at 47-57; that stretch reads PFATGLPHYGH. Residues 604 to 608 carry the 'KMSKS' region motif; the sequence is KMSKR. K607 serves as a coordination point for ATP.

It belongs to the class-I aminoacyl-tRNA synthetase family.

Its subcellular location is the cytoplasm. It catalyses the reaction tRNA(Ile) + L-isoleucine + ATP = L-isoleucyl-tRNA(Ile) + AMP + diphosphate. The protein is Probable isoleucine--tRNA ligase, cytoplasmic (ileS) of Dictyostelium discoideum (Social amoeba).